The sequence spans 239 residues: tRNA (guanine-N(7)-)-methyltransferase (239 aa).

The S-adenosyl-L-methionine site is built by E69, E94, D121, and D144. D144 is a catalytic residue. Residue K148 participates in substrate binding. The interaction with RNA stretch occupies residues 150–155 (RHNKRR). Residues D180 and 217-220 (TKFE) contribute to the substrate site.

Belongs to the class I-like SAM-binding methyltransferase superfamily. TrmB family. Monomer.

The catalysed reaction is guanosine(46) in tRNA + S-adenosyl-L-methionine = N(7)-methylguanosine(46) in tRNA + S-adenosyl-L-homocysteine. It participates in tRNA modification; N(7)-methylguanine-tRNA biosynthesis. In terms of biological role, catalyzes the formation of N(7)-methylguanine at position 46 (m7G46) in tRNA. The protein is tRNA (guanine-N(7)-)-methyltransferase of Photorhabdus laumondii subsp. laumondii (strain DSM 15139 / CIP 105565 / TT01) (Photorhabdus luminescens subsp. laumondii).